A 203-amino-acid chain; its full sequence is Probable flagellin 1 (203 aa).

Positions 1 to 11 (MGMRFLKNEKG) are excised as a propeptide.

Belongs to the archaeal flagellin family.

The protein localises to the archaeal flagellum. Its function is as follows. Flagellin is the subunit protein which polymerizes to form the filaments of archaeal flagella. The polypeptide is Probable flagellin 1 (flaB1) (Archaeoglobus fulgidus (strain ATCC 49558 / DSM 4304 / JCM 9628 / NBRC 100126 / VC-16)).